The primary structure comprises 58 residues: uncharacterized protein (58 aa).

A coiled-coil region spans residues 3–52 (KVILEHLQRIEKQLEILNSKIENFLGFEELSEEELKELDEIEAKMEKGEK).

This is an uncharacterized protein from Archaeoglobus fulgidus (strain ATCC 49558 / DSM 4304 / JCM 9628 / NBRC 100126 / VC-16).